We begin with the raw amino-acid sequence, 610 residues long: UvrABC system protein C (610 aa).

A GIY-YIG domain is found at 16-94 (SQPGVYRMYD…IKLYQPRYNV (79 aa)). The UVR domain occupies 204-239 (DQVLTQLISRMETASQNLEFEEAARIRDQIQAVRRV).

The protein belongs to the UvrC family. In terms of assembly, interacts with UvrB in an incision complex.

It is found in the cytoplasm. Functionally, the UvrABC repair system catalyzes the recognition and processing of DNA lesions. UvrC both incises the 5' and 3' sides of the lesion. The N-terminal half is responsible for the 3' incision and the C-terminal half is responsible for the 5' incision. This is UvrABC system protein C from Escherichia coli (strain ATCC 8739 / DSM 1576 / NBRC 3972 / NCIMB 8545 / WDCM 00012 / Crooks).